Consider the following 712-residue polypeptide: Phosphatase and actin regulator 4 (712 aa).

Disordered stretches follow at residues 1 to 22 and 90 to 405; these read MGQA…GQPT and RGLL…EVPK. The RPEL 1 repeat unit spans residues 72–97; that stretch reads EVLERKISMRKPREELVKRGLLLEDS. A compositionally biased stretch (polar residues) spans 114–124; it reads NGHTTLIGSTR. Phosphoserine occurs at positions 125, 127, 140, and 156. Residues 136 to 152 are compositionally biased toward basic and acidic residues; the sequence is ERIASLRKPVPEEEPKK. The span at 198–230 shows a compositional bias: low complexity; the sequence is ATSSGSLARPSSSASTTAITTAPAATMAATNPA. A compositionally biased stretch (polar residues) spans 233–243; sequence VHSSGPPSQAP. Residues 245–267 show a composition bias toward low complexity; sequence TLPAAPASTHTTATLSLTHTGPA. 3 positions are modified to phosphoserine: S282, S303, and S353. Over residues 345–357 the composition is skewed to low complexity; sequence SEPLLTPSSSPLP. Residues 358–371 are compositionally biased toward pro residues; sequence AHIPPEPPQSPPFP. S436 carries the post-translational modification Phosphoserine. The residue at position 441 (T441) is a Phosphothreonine. Phosphoserine occurs at positions 452, 462, 473, 524, 526, 567, and 600. A disordered region spans residues 507–557; the sequence is VIPKLPQCLQEEEEGKESDSDSEGPIQYRDEEDEDESHHSALANKVKRKDT. Over residues 516 to 528 the composition is skewed to acidic residues; it reads QEEEEGKESDSDS. RPEL repeat units follow at residues 593-618 and 631-656; these read NTLI…QPKN and RRLT…RFNE. The tract at residues 602–626 is disordered; the sequence is RPTPEELEQRNILQPKNEADRQAEK. S638 bears the Phosphoserine mark.

The protein belongs to the phosphatase and actin regulator family. In terms of assembly, binds PPP1CA and actin.

The protein localises to the cytoplasm. It is found in the cell projection. It localises to the lamellipodium. Regulator of protein phosphatase 1 (PP1) required for neural tube and optic fissure closure, and enteric neural crest cell (ENCCs) migration during development. Acts as an activator of PP1 by interacting with PPP1CA and preventing phosphorylation of PPP1CA at 'Thr-320'. During neural tube closure, localizes to the ventral neural tube and activates PP1, leading to down-regulate cell proliferation within cranial neural tissue and the neural retina. Also acts as a regulator of migration of enteric neural crest cells (ENCCs) by activating PP1, leading to dephosphorylation and subsequent activation of cofilin (COF1 or COF2) and repression of the integrin signaling through the RHO/ROCK pathway. This chain is Phosphatase and actin regulator 4 (PHACTR4), found in Bos taurus (Bovine).